A 271-amino-acid chain; its full sequence is Tryptophan synthase alpha chain (271 aa).

Catalysis depends on proton acceptor residues Glu-49 and Asp-60.

Belongs to the TrpA family. Tetramer of two alpha and two beta chains.

The catalysed reaction is (1S,2R)-1-C-(indol-3-yl)glycerol 3-phosphate + L-serine = D-glyceraldehyde 3-phosphate + L-tryptophan + H2O. The protein operates within amino-acid biosynthesis; L-tryptophan biosynthesis; L-tryptophan from chorismate: step 5/5. The alpha subunit is responsible for the aldol cleavage of indoleglycerol phosphate to indole and glyceraldehyde 3-phosphate. The chain is Tryptophan synthase alpha chain from Burkholderia pseudomallei (strain 1106a).